We begin with the raw amino-acid sequence, 704 residues long: Elongation factor G (704 aa).

A tr-type G domain is found at 8–290 (ARYRNIGISA…AVIDYLPSPV (283 aa)). GTP contacts are provided by residues 17–24 (AHIDAGKT), 88–92 (DTPGH), and 142–145 (NKMD).

It belongs to the TRAFAC class translation factor GTPase superfamily. Classic translation factor GTPase family. EF-G/EF-2 subfamily.

It localises to the cytoplasm. Its function is as follows. Catalyzes the GTP-dependent ribosomal translocation step during translation elongation. During this step, the ribosome changes from the pre-translocational (PRE) to the post-translocational (POST) state as the newly formed A-site-bound peptidyl-tRNA and P-site-bound deacylated tRNA move to the P and E sites, respectively. Catalyzes the coordinated movement of the two tRNA molecules, the mRNA and conformational changes in the ribosome. This is Elongation factor G from Salmonella arizonae (strain ATCC BAA-731 / CDC346-86 / RSK2980).